We begin with the raw amino-acid sequence, 238 residues long: Orotidine 5'-phosphate decarboxylase (238 aa).

Residues D18, K40, D67 to T76, T122, R183, Q192, and R213 each bind substrate. Residue K69 is the Proton donor of the active site.

This sequence belongs to the OMP decarboxylase family. Type 1 subfamily. Homodimer.

The enzyme catalyses orotidine 5'-phosphate + H(+) = UMP + CO2. It participates in pyrimidine metabolism; UMP biosynthesis via de novo pathway; UMP from orotate: step 2/2. Functionally, catalyzes the decarboxylation of orotidine 5'-monophosphate (OMP) to uridine 5'-monophosphate (UMP). The sequence is that of Orotidine 5'-phosphate decarboxylase from Brucella abortus (strain S19).